The sequence spans 307 residues: MEAYQAEIIRRFGRVRRARGFYLYTERGVRITDLFLDGGASILGRNASRARLDFKRYLSRGLWGPLPTCASAQLQQALRTCFPAHEVRYYAHAERAQEVCARFLNLACGAAPCEVPVWRPCAPCVPQTDVFLVVPPFPSPAPFVALRAHCAARAPAGDVLFAPIAQAIARAFWDLARVGSLSQPARAMPHALLDSSHTTQEDAVPALPHTKKRRRGLNRVRRAQKCARQERDRAQLITLMSTWWRTEGPYLFPTVSEERYEALFARALDAHILLSPLYTEPSVLPTLEHYTQLCTFFLQEQEKEHHE.

To B.burgdorferi BB0340.

This is an uncharacterized protein from Treponema pallidum (strain Nichols).